The chain runs to 421 residues: Serine hydroxymethyltransferase (421 aa).

(6S)-5,6,7,8-tetrahydrofolate contacts are provided by residues Leu-121 and 125–127 (GHL). N6-(pyridoxal phosphate)lysine is present on Lys-230. 355–357 (SPF) is a binding site for (6S)-5,6,7,8-tetrahydrofolate.

The protein belongs to the SHMT family. In terms of assembly, homodimer. Pyridoxal 5'-phosphate is required as a cofactor.

The protein resides in the cytoplasm. The enzyme catalyses (6R)-5,10-methylene-5,6,7,8-tetrahydrofolate + glycine + H2O = (6S)-5,6,7,8-tetrahydrofolate + L-serine. It participates in one-carbon metabolism; tetrahydrofolate interconversion. Its pathway is amino-acid biosynthesis; glycine biosynthesis; glycine from L-serine: step 1/1. Its function is as follows. Catalyzes the reversible interconversion of serine and glycine with tetrahydrofolate (THF) serving as the one-carbon carrier. This reaction serves as the major source of one-carbon groups required for the biosynthesis of purines, thymidylate, methionine, and other important biomolecules. Also exhibits THF-independent aldolase activity toward beta-hydroxyamino acids, producing glycine and aldehydes, via a retro-aldol mechanism. The sequence is that of Serine hydroxymethyltransferase from Psychromonas ingrahamii (strain DSM 17664 / CCUG 51855 / 37).